Reading from the N-terminus, the 206-residue chain is Probable GTP-binding protein EngB (206 aa).

Positions 23 to 202 constitute an EngB-type G domain; it reads HTAEVAFVGR…WGALLDTFGK (180 aa). Residues 31-38, 58-62, 83-86, 150-153, and 181-183 contribute to the GTP site; these read GRSNVGKS, GRTRT, DLPG, TKVD, and FSS. Positions 38 and 60 each coordinate Mg(2+).

This sequence belongs to the TRAFAC class TrmE-Era-EngA-EngB-Septin-like GTPase superfamily. EngB GTPase family. It depends on Mg(2+) as a cofactor.

In terms of biological role, necessary for normal cell division and for the maintenance of normal septation. The sequence is that of Probable GTP-binding protein EngB from Myxococcus xanthus (strain DK1622).